Consider the following 305-residue polypeptide: Methionyl-tRNA formyltransferase (305 aa).

111–114 serves as a coordination point for (6S)-5,6,7,8-tetrahydrofolate; sequence SLLP.

This sequence belongs to the Fmt family.

It carries out the reaction L-methionyl-tRNA(fMet) + (6R)-10-formyltetrahydrofolate = N-formyl-L-methionyl-tRNA(fMet) + (6S)-5,6,7,8-tetrahydrofolate + H(+). Functionally, attaches a formyl group to the free amino group of methionyl-tRNA(fMet). The formyl group appears to play a dual role in the initiator identity of N-formylmethionyl-tRNA by promoting its recognition by IF2 and preventing the misappropriation of this tRNA by the elongation apparatus. In Helicobacter pylori (strain HPAG1), this protein is Methionyl-tRNA formyltransferase.